The following is a 136-amino-acid chain: Keratin-associated protein 15-1 (136 aa).

The protein belongs to the PMG family. In terms of assembly, interacts with hair keratins.

In terms of biological role, in the hair cortex, hair keratin intermediate filaments are embedded in an interfilamentous matrix, consisting of hair keratin-associated proteins (KRTAP), which are essential for the formation of a rigid and resistant hair shaft through their extensive disulfide bond cross-linking with abundant cysteine residues of hair keratins. The matrix proteins include the high-sulfur and high-glycine-tyrosine keratins. This Capra hircus (Goat) protein is Keratin-associated protein 15-1 (KRTAP15-1).